A 165-amino-acid polypeptide reads, in one-letter code: Biosynthetic peptidoglycan transglycosylase (165 aa).

It belongs to the glycosyltransferase 51 family.

The protein localises to the cell inner membrane. It catalyses the reaction [GlcNAc-(1-&gt;4)-Mur2Ac(oyl-L-Ala-gamma-D-Glu-L-Lys-D-Ala-D-Ala)](n)-di-trans,octa-cis-undecaprenyl diphosphate + beta-D-GlcNAc-(1-&gt;4)-Mur2Ac(oyl-L-Ala-gamma-D-Glu-L-Lys-D-Ala-D-Ala)-di-trans,octa-cis-undecaprenyl diphosphate = [GlcNAc-(1-&gt;4)-Mur2Ac(oyl-L-Ala-gamma-D-Glu-L-Lys-D-Ala-D-Ala)](n+1)-di-trans,octa-cis-undecaprenyl diphosphate + di-trans,octa-cis-undecaprenyl diphosphate + H(+). It functions in the pathway cell wall biogenesis; peptidoglycan biosynthesis. In terms of biological role, peptidoglycan polymerase that catalyzes glycan chain elongation from lipid-linked precursors. This chain is Biosynthetic peptidoglycan transglycosylase, found in Neisseria meningitidis.